The sequence spans 309 residues: Mitochondrial phosphate carrier protein 1, mitochondrial (309 aa).

The Mitochondrial intermembrane segment spans residues 1 to 15; it reads MTRVKSKLDEELSSP. The chain crosses the membrane as a helical span at residues 16–36; that stretch reads WFYTVCTMGGMLSAGTTHLAI. Solcar repeat units follow at residues 16–100, 109–193, and 210–289; these read WFYT…FKTL, NRTS…SVEF, and QQLG…IKVL. At 37 to 74 the chain is on the mitochondrial matrix side; it reads TPLDVLKVNMQVNPVKYNSIPSGFSTLLREHGHSYLWR. Residues 75-94 traverse the membrane as a helical segment; it reads GWSGKLLGYGVQGGCRFGLY. Residues 95 to 111 lie on the Mitochondrial intermembrane side of the membrane; sequence EYFKTLYSDVLPNHNRT. The chain crosses the membrane as a helical span at residues 112–132; the sequence is SIYFLSSASAQIFADMALCPF. The Mitochondrial matrix segment spans residues 133–167; it reads EAIKVRVQTQPMFAKGLLDGFPRVYRSEGLAGFHR. The chain crosses the membrane as a helical span at residues 168–187; sequence GLFPLWCRNLPFSMVMFSTF. The Mitochondrial intermembrane portion of the chain corresponds to 188 to 208; that stretch reads EQSVEFIYQKIIQKRKQDCSK. A helical transmembrane segment spans residues 209–229; sequence AQQLGVTCLAGYTAGAVGTII. Topologically, residues 230-268 are mitochondrial matrix; it reads SNPADVVLSSLYNNKAKNVLQAVRNIGFVGLFTRSLPVR. The chain crosses the membrane as a helical span at residues 269–289; it reads ITIVGPVITLQWFFYDAIKVL. Residues 290–309 lie on the Mitochondrial intermembrane side of the membrane; sequence SGFPTSGGVKKPVDAAKLSV.

The protein belongs to the mitochondrial carrier (TC 2.A.29) family. Expressed in stems, leaves and flowers. Strong expression in the stamens of flowers.

The protein localises to the mitochondrion inner membrane. Functionally, transport of phosphate groups from the cytosol to the mitochondrial matrix. Mediates salt stress tolerance through an ATP-dependent pathway and via modulation of the gibberellin metabolism. The chain is Mitochondrial phosphate carrier protein 1, mitochondrial (MPT1) from Arabidopsis thaliana (Mouse-ear cress).